We begin with the raw amino-acid sequence, 102 residues long: Small ribosomal subunit protein uS10 (102 aa).

The protein belongs to the universal ribosomal protein uS10 family. As to quaternary structure, part of the 30S ribosomal subunit.

Functionally, involved in the binding of tRNA to the ribosomes. This chain is Small ribosomal subunit protein uS10, found in Sulfurihydrogenibium sp. (strain YO3AOP1).